Consider the following 601-residue polypeptide: Sulfite reductase [NADPH] flavoprotein alpha-component (601 aa).

In terms of domain architecture, Flavodoxin-like spans 65-203; the sequence is ITIISASQTG…NYNKWSQDLL (139 aa). FMN is bound by residues 71–76, 118–121, and 154–163; these read SQTGNA, STQG, and LGDTSYNLFC. The FAD-binding FR-type domain maps to 236 to 450; it reads KNPAEGIILT…IQTNDNFRLP (215 aa). Residues Thr324, Ile358, 388-391, 406-408, and 421-424 contribute to the FAD site; these read RLYS, TVG, and GGAS. Residues 521–522, 527–531, and Asp563 each bind NADP(+); these read SQ and KIYVQ. Residue Tyr601 coordinates FAD.

The protein belongs to the NADPH-dependent sulphite reductase flavoprotein subunit CysJ family. This sequence in the N-terminal section; belongs to the flavodoxin family. It in the C-terminal section; belongs to the flavoprotein pyridine nucleotide cytochrome reductase family. As to quaternary structure, alpha(8)-beta(8). The alpha component is a flavoprotein, the beta component is a hemoprotein. The cofactor is FAD. FMN serves as cofactor.

It carries out the reaction hydrogen sulfide + 3 NADP(+) + 3 H2O = sulfite + 3 NADPH + 4 H(+). The protein operates within sulfur metabolism; hydrogen sulfide biosynthesis; hydrogen sulfide from sulfite (NADPH route): step 1/1. In terms of biological role, component of the sulfite reductase complex that catalyzes the 6-electron reduction of sulfite to sulfide. This is one of several activities required for the biosynthesis of L-cysteine from sulfate. The flavoprotein component catalyzes the electron flow from NADPH -&gt; FAD -&gt; FMN to the hemoprotein component. This chain is Sulfite reductase [NADPH] flavoprotein alpha-component, found in Buchnera aphidicola subsp. Acyrthosiphon pisum (strain APS) (Acyrthosiphon pisum symbiotic bacterium).